A 331-amino-acid polypeptide reads, in one-letter code: Glycerol-3-phosphate dehydrogenase [NAD(P)+] (331 aa).

The NADPH site is built by S10, W11, and K101. 3 residues coordinate sn-glycerol 3-phosphate: K101, G132, and S134. A136 serves as a coordination point for NADPH. The sn-glycerol 3-phosphate site is built by K188, D241, S251, R252, and N253. K188 (proton acceptor) is an active-site residue. R252 contributes to the NADPH binding site. V276 and E278 together coordinate NADPH.

This sequence belongs to the NAD-dependent glycerol-3-phosphate dehydrogenase family.

Its subcellular location is the cytoplasm. The enzyme catalyses sn-glycerol 3-phosphate + NAD(+) = dihydroxyacetone phosphate + NADH + H(+). It carries out the reaction sn-glycerol 3-phosphate + NADP(+) = dihydroxyacetone phosphate + NADPH + H(+). The protein operates within membrane lipid metabolism; glycerophospholipid metabolism. Functionally, catalyzes the reduction of the glycolytic intermediate dihydroxyacetone phosphate (DHAP) to sn-glycerol 3-phosphate (G3P), the key precursor for phospholipid synthesis. The chain is Glycerol-3-phosphate dehydrogenase [NAD(P)+] from Acholeplasma laidlawii (strain PG-8A).